The chain runs to 580 residues: DBIRD complex subunit ZNF326 (580 aa).

Residues 1-124 (MDFEDDYVHS…YRNSLDSFGG (124 aa)) form a mediates transcriptional activation region. A phosphoserine mark is found at serine 48, serine 56, serine 63, serine 69, serine 81, serine 82, serine 91, serine 106, serine 114, serine 118, serine 121, and serine 137. Residue lysine 140 forms a Glycyl lysine isopeptide (Lys-Gly) (interchain with G-Cter in SUMO2) linkage. The tract at residues 156 to 196 (SYSSFSSPHMKPAPVGSRGRGTPAYPESTFGSRSYDAFGGP) is disordered. Arginine 173 carries the post-translational modification Omega-N-methylarginine. At serine 212 the chain carries Phosphoserine. Arginine 235 carries the omega-N-methylarginine modification. Positions 238–260 (KRKMMQIFIKPGGAFIKKPKLAK) match the Bipartite nuclear localization signal motif. Residue lysine 240 forms a Glycyl lysine isopeptide (Lys-Gly) (interchain with G-Cter in SUMO2) linkage. Lysine 247 is modified (N6-acetyllysine; alternate). Lysine 247 is covalently cross-linked (Glycyl lysine isopeptide (Lys-Gly) (interchain with G-Cter in SUMO2); alternate). Residues lysine 254 and lysine 264 each participate in a glycyl lysine isopeptide (Lys-Gly) (interchain with G-Cter in SUMO2) cross-link. Positions 256–302 (PKLAKPMDKMNLSKSPTKTDPKNEEEEKRRIEARREKQRRRREKNSE) are disordered. Serine 270 carries the post-translational modification Phosphoserine. A compositionally biased stretch (basic and acidic residues) spans 272 to 290 (TKTDPKNEEEEKRRIEARR). The segment at 314-336 (CSFCKFRTFEEKDIELHLESSSH) adopts a C2H2 AKAP95-type 1 zinc-finger fold. Lysine 401 is covalently cross-linked (Glycyl lysine isopeptide (Lys-Gly) (interchain with G-Cter in SUMO2)). The C2H2 AKAP95-type 2 zinc-finger motif lies at 407–430 (CSACSVYIPALHSSVQLHLKSPDH). Glycyl lysine isopeptide (Lys-Gly) (interchain with G-Cter in SUMO2) cross-links involve residues lysine 459 and lysine 467. The interval 470-580 (NPFEIQDHPQ…ATEQCEHRQM (111 aa)) is disordered. The segment covering 483–529 (IEGDEEDEEKIDEPIEEEEEEEEEEEEEGEEAGSVEEEGDVEGEEGT) has biased composition (acidic residues). Positions 530-539 (AEAAAAGEAD) are enriched in low complexity. Over residues 540-562 (AVGEAEGAGEAEEAEEEEEEEGT) the composition is skewed to acidic residues.

Belongs to the AKAP95 family. In terms of assembly, component of the DBIRD complex. Interacts with CCAR2; the interaction is direct. Ubiquitously expressed in adult tissues. Highly expressed in neuronal tissues such as brain and neural tube.

It localises to the nucleus matrix. Core component of the DBIRD complex, a multiprotein complex that acts at the interface between core mRNP particles and RNA polymerase II (RNAPII) and integrates transcript elongation with the regulation of alternative splicing: the DBIRD complex affects local transcript elongation rates and alternative splicing of a large set of exons embedded in (A + T)-rich DNA regions. May also play a role in neuronal differentiation. Able to bind DNA and activate expression in vitro. The polypeptide is DBIRD complex subunit ZNF326 (Znf326) (Mus musculus (Mouse)).